Consider the following 365-residue polypeptide: Phosphatidylcholine:ceramide cholinephosphotransferase 2 (365 aa).

Residues 9-50 (LEGHLESQTNNSTNTYTSPTEAVEEEDKNGKGKPKTLSNGLR) form a disordered region. Low complexity predominate over residues 15 to 28 (SQTNNSTNTYTSPT). The next 5 helical transmembrane spans lie at 80–100 (GIAF…ITVV), 128–148 (FSVS…QWLF), 159–179 (FFFI…VTTL), 219–239 (ILCG…TYLF), and 248–268 (FWWY…CILV). H229 is a catalytic residue. Active-site residues include H272 and D276. The helical transmembrane segment at 273 to 290 (YTVDVIIAYYITTRLFWW) threads the bilayer. Residues 291–365 (YHSMANEKNL…KIGEDNEKST (75 aa)) are Cytoplasmic-facing. Residues C331, C332, C343, and C348 are each lipidated (S-palmitoyl cysteine).

This sequence belongs to the sphingomyelin synthase family. In terms of processing, palmitoylated on Cys-331, Cys-332, Cys-343 and Cys-348; which plays an important role in plasma membrane localization. Expression restricted to late round spermatids and elongating spermatids but not detected in late elongate spermatids and Sertoli cells (at protein level).

The protein localises to the cell membrane. It is found in the golgi apparatus membrane. It carries out the reaction an N-acylsphing-4-enine + a 1,2-diacyl-sn-glycero-3-phosphocholine = a sphingomyelin + a 1,2-diacyl-sn-glycerol. It catalyses the reaction an N-acylsphinganine + a 1,2-diacyl-sn-glycero-3-phosphocholine = an N-acylsphinganine-1-phosphocholine + a 1,2-diacyl-sn-glycerol. The catalysed reaction is an N-acyl-(4R)-4-hydroxysphinganine + a 1,2-diacyl-sn-glycero-3-phosphocholine = an N-acyl-(4R)-4-hydroxysphinganine-phosphocholine + a 1,2-diacyl-sn-glycerol. The enzyme catalyses an N-acylsphing-4-enine + a 1,2-diacyl-sn-glycero-3-phosphoethanolamine = an N-acylsphing-4-enine 1-phosphoethanolamine + a 1,2-diacyl-sn-glycerol. It carries out the reaction an N-acylsphinganine + a 1,2-diacyl-sn-glycero-3-phosphoethanolamine = an N-acylsphinganine-1-phosphoethanolamine + a 1,2-diacyl-sn-glycerol. It catalyses the reaction an N-acyl-(4R)-4-hydroxysphinganine + a 1,2-diacyl-sn-glycero-3-phosphoethanolamine = an N-acyl-(4R)-4-hydroxysphinganine-1-phosphoethanolamine + a 1,2-diacyl-sn-glycerol. The catalysed reaction is 1,2-dihexadecanoyl-sn-glycero-3-phosphocholine + an N-acylsphing-4-enine = 1,2-dihexadecanoyl-sn-glycerol + a sphingomyelin. The enzyme catalyses 1-(9Z-octadecenoyl)-2-acyl-sn-3-glycerol + a sphingomyelin = a 1-(9Z-octadecenoyl)-2-acyl-sn-glycero-3-phosphocholine + an N-acylsphing-4-enine. It carries out the reaction N-hexadecanoylsphinganine + a 1,2-diacyl-sn-glycero-3-phosphocholine = N-hexadecanoyl-sphinganine-1-phosphocholine + a 1,2-diacyl-sn-glycerol. It catalyses the reaction N-hexadecanoyl-(4R)-hydroxysphinganine + a 1,2-diacyl-sn-glycero-3-phosphocholine = N-hexadecanoyl-(4R)-hydroxysphinganine-phosphocholine + a 1,2-diacyl-sn-glycerol. The catalysed reaction is N-hexadecanoylsphinganine + a 1,2-diacyl-sn-glycero-3-phosphoethanolamine = N-hexadecanoyl-sphinganine-1-phosphoethanolamine + a 1,2-diacyl-sn-glycerol. The enzyme catalyses N-hexadecanoyl-(4R)-hydroxysphinganine + a 1,2-diacyl-sn-glycero-3-phosphoethanolamine = N-hexadecanoyl-(4R)-hydroxysphinganine-1-phosphoethanolamine + a 1,2-diacyl-sn-glycerol. The protein operates within sphingolipid metabolism. Its function is as follows. Sphingomyelin synthase that primarily contributes to sphingomyelin synthesis and homeostasis at the plasma membrane. Catalyzes the reversible transfer of phosphocholine moiety in sphingomyelin biosynthesis: in the forward reaction transfers phosphocholine head group of phosphatidylcholine (PC) on to ceramide (CER) to form ceramide phosphocholine (sphingomyelin, SM) and diacylglycerol (DAG) as by-product, and in the reverse reaction transfers phosphocholine from SM to DAG to form PC and CER. The direction of the reaction appears to depend on the levels of CER and DAG in the plasma membrane. Does not use free phosphorylcholine or CDP-choline as donors. Can also transfer phosphoethanolamine head group of phosphatidylethanolamine (PE) on to ceramide (CER) to form ceramide phosphoethanolamine (CPE). Regulates receptor-mediated signal transduction via mitogenic DAG and proapoptotic CER, as well as via SM, a structural component of membrane rafts that serve as platforms for signal transduction and protein sorting. To a lesser extent, plays a role in secretory transport via regulation of DAG pool at the Golgi apparatus and its downstream effects on PRKD1. Required for normal bone matrix mineralization. The polypeptide is Phosphatidylcholine:ceramide cholinephosphotransferase 2 (Sgms2) (Rattus norvegicus (Rat)).